Here is an 81-residue protein sequence, read N- to C-terminus: uncharacterized protein (81 aa).

The transit peptide at 1–20 directs the protein to the mitochondrion; sequence MYSRVLSVAAIVTMALAVQA. A disordered region spans residues 27–53; the sequence is YGNTTNSTGTTNGTNGTNTTTSSTATQ. Low complexity predominate over residues 28-53; sequence GNTTNSTGTTNGTNGTNTTTSSTATQ. The chain crosses the membrane as a helical span at residues 59-79; that stretch reads ITNFSSGAFVIAMIAVACSVM.

The protein localises to the mitochondrion membrane. This is an uncharacterized protein from Schizosaccharomyces pombe (strain 972 / ATCC 24843) (Fission yeast).